We begin with the raw amino-acid sequence, 83 residues long: Mu-theraphotoxin-Hhn2b 2 (83 aa).

An N-terminal signal peptide occupies residues 1–21 (MKASMFLALAGLVLLFVVCYA). Positions 22–48 (SESEEKEFPRELISKIFTVDDFKGEER) are excised as a propeptide. 3 disulfides stabilise this stretch: Cys-50–Cys-65, Cys-57–Cys-70, and Cys-64–Cys-77. A Leucine amide modification is found at Leu-81.

The protein belongs to the neurotoxin 10 (Hwtx-1) family. 14 (Hntx-1) subfamily. Monomer. Expressed by the venom gland.

The protein resides in the secreted. In terms of biological role, weakly blocks the rat SCN2A/SCN1B (Nav1.2/beta-1) sodium channel (IC(50)=68 uM) and the insect sodium channel para/tipE (IC(50)=4.3 uM), without altering the activation or inactivation kinetics (depressant toxin). The protein is Mu-theraphotoxin-Hhn2b 2 of Cyriopagopus hainanus (Chinese bird spider).